We begin with the raw amino-acid sequence, 150 residues long: Viral late gene transcription factor 2 (150 aa).

The protein belongs to the orthopoxvirus VLTF-2/OPG126 family. In terms of assembly, interacts with itself. Interacts with the late transcription factors VLTF-1/OPG093.

Functionally, acts with RNA polymerase to initiate transcription from late gene promoters. The chain is Viral late gene transcription factor 2 (OPG126) from Vaccinia virus (strain Western Reserve) (VACV).